The sequence spans 69 residues: uncharacterized protein (69 aa).

Its subcellular location is the mitochondrion. This is an uncharacterized protein from Marchantia polymorpha (Common liverwort).